The sequence spans 976 residues: Leucine--tRNA ligase (976 aa).

A compositionally biased stretch (low complexity) spans 1–23 (MTESPTTTPGSTSGAPSGVPSGV). The segment at 1–34 (MTESPTTTPGSTSGAPSGVPSGVNDAESDAPRHR) is disordered. A 'HIGH' region motif is present at residues 86–97 (PYPSGEGLHVGH). Residues 745-749 (KIGKS) carry the 'KMSKS' region motif. Lys748 is an ATP binding site.

Belongs to the class-I aminoacyl-tRNA synthetase family.

It localises to the cytoplasm. It carries out the reaction tRNA(Leu) + L-leucine + ATP = L-leucyl-tRNA(Leu) + AMP + diphosphate. This Mycobacterium marinum (strain ATCC BAA-535 / M) protein is Leucine--tRNA ligase.